The chain runs to 131 residues: Aspartate 1-decarboxylase (131 aa).

S25 functions as the Schiff-base intermediate with substrate; via pyruvic acid in the catalytic mechanism. S25 carries the post-translational modification Pyruvic acid (Ser). T57 is a substrate binding site. Y58 (proton donor) is an active-site residue. Residue 73 to 75 coordinates substrate; sequence GAA.

The protein belongs to the PanD family. In terms of assembly, heterooctamer of four alpha and four beta subunits. It depends on pyruvate as a cofactor. In terms of processing, is synthesized initially as an inactive proenzyme, which is activated by self-cleavage at a specific serine bond to produce a beta-subunit with a hydroxyl group at its C-terminus and an alpha-subunit with a pyruvoyl group at its N-terminus.

The protein resides in the cytoplasm. It carries out the reaction L-aspartate + H(+) = beta-alanine + CO2. The protein operates within cofactor biosynthesis; (R)-pantothenate biosynthesis; beta-alanine from L-aspartate: step 1/1. Its function is as follows. Catalyzes the pyruvoyl-dependent decarboxylation of aspartate to produce beta-alanine. This Anaeromyxobacter sp. (strain Fw109-5) protein is Aspartate 1-decarboxylase.